A 227-amino-acid chain; its full sequence is Monoamine regulon transcriptional regulator (227 aa).

An HTH luxR-type domain is found at 155-220 (EDDLPAILTA…ELVSRTWMPA (66 aa)). A DNA-binding region (H-T-H motif) is located at residues 179–198 (NKLIARQLDISLSTVKTHLR).

Functionally, positive regulatory protein for the induction of arylsulfatase synthesis (maoA), tyramine oxidase (tynA), maoC, maoE/F operon, and atsB/A operon which are all regulated by monoamines, and included under the common term of monoamine regulon. This chain is Monoamine regulon transcriptional regulator (moaR), found in Klebsiella aerogenes (Enterobacter aerogenes).